The following is a 363-amino-acid chain: FMNH(2)-dependent dimethylsulfone monooxygenase (363 aa).

This sequence belongs to the SsuD family.

The enzyme catalyses dimethyl sulfone + FMNH2 + O2 = methanesulfinate + FMN + formaldehyde + H2O + 2 H(+). Its function is as follows. Involved in the dimethyl sulfide degradation pathway. Catalyzes the oxidation of dimethylsulfone (DMSO2) to yield methanesulfinate, which is oxidized spontaneously to methanesulfonate in the presence of dioxygen and FMNH(2). The polypeptide is FMNH(2)-dependent dimethylsulfone monooxygenase (Pseudomonas putida (Arthrobacter siderocapsulatus)).